A 202-amino-acid polypeptide reads, in one-letter code: ATP-dependent Clp protease proteolytic subunit (202 aa).

Serine 98 acts as the Nucleophile in catalysis. The active site involves histidine 123.

This sequence belongs to the peptidase S14 family. As to quaternary structure, fourteen ClpP subunits assemble into 2 heptameric rings which stack back to back to give a disk-like structure with a central cavity, resembling the structure of eukaryotic proteasomes.

The protein localises to the cytoplasm. It catalyses the reaction Hydrolysis of proteins to small peptides in the presence of ATP and magnesium. alpha-casein is the usual test substrate. In the absence of ATP, only oligopeptides shorter than five residues are hydrolyzed (such as succinyl-Leu-Tyr-|-NHMec, and Leu-Tyr-Leu-|-Tyr-Trp, in which cleavage of the -Tyr-|-Leu- and -Tyr-|-Trp bonds also occurs).. Functionally, cleaves peptides in various proteins in a process that requires ATP hydrolysis. Has a chymotrypsin-like activity. Plays a major role in the degradation of misfolded proteins. The sequence is that of ATP-dependent Clp protease proteolytic subunit from Syntrophobacter fumaroxidans (strain DSM 10017 / MPOB).